Consider the following 397-residue polypeptide: Elongation factor Tu (397 aa).

A tr-type G domain is found at 10–206 (KPHVNIGTIG…AVDENVPDPE (197 aa)). A G1 region spans residues 19–26 (GHVDHGKT). Residue 19–26 (GHVDHGKT) participates in GTP binding. T26 provides a ligand contact to Mg(2+). The tract at residues 62–66 (GITIQ) is G2. A G3 region spans residues 83 to 86 (DAPG). Residues 83–87 (DAPGH) and 138–141 (NKAD) contribute to the GTP site. Residues 138–141 (NKAD) are G4. The interval 176–178 (SAL) is G5.

It belongs to the TRAFAC class translation factor GTPase superfamily. Classic translation factor GTPase family. EF-Tu/EF-1A subfamily. In terms of assembly, monomer.

It is found in the cytoplasm. It carries out the reaction GTP + H2O = GDP + phosphate + H(+). Its function is as follows. GTP hydrolase that promotes the GTP-dependent binding of aminoacyl-tRNA to the A-site of ribosomes during protein biosynthesis. The protein is Elongation factor Tu of Saccharopolyspora erythraea (strain ATCC 11635 / DSM 40517 / JCM 4748 / NBRC 13426 / NCIMB 8594 / NRRL 2338).